Consider the following 101-residue polypeptide: NAD(P)H-quinone oxidoreductase subunit 4L (101 aa).

The next 3 helical transmembrane spans lie at 3 to 23 (LQYFLLIAAALFCIGVYGLVT), 30 to 50 (VLMSIELMLNAVNLNLMAFSN), and 64 to 84 (IFVITIAAAEAAVGLAIVLAI).

Belongs to the complex I subunit 4L family. NDH-1 can be composed of about 15 different subunits; different subcomplexes with different compositions have been identified which probably have different functions.

Its subcellular location is the cellular thylakoid membrane. It catalyses the reaction a plastoquinone + NADH + (n+1) H(+)(in) = a plastoquinol + NAD(+) + n H(+)(out). It carries out the reaction a plastoquinone + NADPH + (n+1) H(+)(in) = a plastoquinol + NADP(+) + n H(+)(out). In terms of biological role, NDH-1 shuttles electrons from an unknown electron donor, via FMN and iron-sulfur (Fe-S) centers, to quinones in the respiratory and/or the photosynthetic chain. The immediate electron acceptor for the enzyme in this species is believed to be plastoquinone. Couples the redox reaction to proton translocation, and thus conserves the redox energy in a proton gradient. Cyanobacterial NDH-1 also plays a role in inorganic carbon-concentration. This chain is NAD(P)H-quinone oxidoreductase subunit 4L, found in Leptolyngbya boryana (Plectonema boryanum).